A 377-amino-acid polypeptide reads, in one-letter code: Carboxynorspermidine/carboxyspermidine decarboxylase (377 aa).

K41 is modified (N6-(pyridoxal phosphate)lysine). E238 and D274 together coordinate substrate.

It belongs to the Orn/Lys/Arg decarboxylase class-II family. NspC subfamily. Homodimer. It depends on pyridoxal 5'-phosphate as a cofactor.

Its subcellular location is the cytoplasm. The catalysed reaction is carboxynorspermidine + H(+) = norspermidine + CO2. The enzyme catalyses carboxyspermidine + H(+) = spermidine + CO2. Its activity is regulated as follows. Dithiothreitol greatly stimulates activity, maximum stimulation being at 5-20 mM dithiothreitol concentration. Fe(3+), Fe(2+) and Mn(2+) severely inhibit activity (88%, 82% and 50%, respectively), whereas Zn(2+) has a slightly inhibitory effect (23%) and Mg(2+), Ca(2+), Cu(2+) and Cu(+) have no effect. In terms of biological role, catalyzes the decarboxylation of carboxynorspermidine and carboxyspermidine. 2,3-diaminopropionic acid, 2,4-diaminobutyric acid, L-ornithine or L-lysine cannot serve as substrates. The protein is Carboxynorspermidine/carboxyspermidine decarboxylase of Vibrio alginolyticus.